We begin with the raw amino-acid sequence, 110 residues long: Ferredoxin (110 aa).

4Fe-4S ferredoxin-type domains are found at residues 2-30 and 31-60; these read TYIVTDECVKCKYTDCVEVCPVDCFYEGE and FMLVINPDECIDCGVCVPDCPIDAIKPESP. Residues cysteine 9 and cysteine 17 each contribute to the [3Fe-4S] cluster site. [4Fe-4S] cluster contacts are provided by cysteine 21, cysteine 40, cysteine 43, and cysteine 46. A [3Fe-4S] cluster-binding site is contributed by cysteine 50.

It depends on [4Fe-4S] cluster as a cofactor. Requires [3Fe-4S] cluster as cofactor.

Ferredoxins are iron-sulfur proteins that transfer electrons in a wide variety of metabolic reactions. The polypeptide is Ferredoxin (fdxA) (Rickettsia typhi (strain ATCC VR-144 / Wilmington)).